The chain runs to 284 residues: MEMO1 family protein M1425_2054 (284 aa).

The protein belongs to the MEMO1 family.

This Saccharolobus islandicus (strain M.14.25 / Kamchatka #1) (Sulfolobus islandicus) protein is MEMO1 family protein M1425_2054.